Here is a 202-residue protein sequence, read N- to C-terminus: Imidazoleglycerol-phosphate dehydratase (202 aa).

Belongs to the imidazoleglycerol-phosphate dehydratase family.

The protein localises to the cytoplasm. The enzyme catalyses D-erythro-1-(imidazol-4-yl)glycerol 3-phosphate = 3-(imidazol-4-yl)-2-oxopropyl phosphate + H2O. Its pathway is amino-acid biosynthesis; L-histidine biosynthesis; L-histidine from 5-phospho-alpha-D-ribose 1-diphosphate: step 6/9. The chain is Imidazoleglycerol-phosphate dehydratase from Lactococcus lactis subsp. cremoris (strain SK11).